The following is a 395-amino-acid chain: Succinyl-diaminopimelate desuccinylase (395 aa).

A Zn(2+)-binding site is contributed by His-74. Asp-76 is a catalytic residue. Position 107 (Asp-107) interacts with Zn(2+). Glu-141 functions as the Proton acceptor in the catalytic mechanism. Zn(2+) contacts are provided by Glu-142, Glu-170, and His-368.

The protein belongs to the peptidase M20A family. DapE subfamily. Homodimer. The cofactor is Zn(2+). Co(2+) is required as a cofactor.

The catalysed reaction is N-succinyl-(2S,6S)-2,6-diaminopimelate + H2O = (2S,6S)-2,6-diaminopimelate + succinate. It participates in amino-acid biosynthesis; L-lysine biosynthesis via DAP pathway; LL-2,6-diaminopimelate from (S)-tetrahydrodipicolinate (succinylase route): step 3/3. Catalyzes the hydrolysis of N-succinyl-L,L-diaminopimelic acid (SDAP), forming succinate and LL-2,6-diaminopimelate (DAP), an intermediate involved in the bacterial biosynthesis of lysine and meso-diaminopimelic acid, an essential component of bacterial cell walls. This chain is Succinyl-diaminopimelate desuccinylase, found in Chelativorans sp. (strain BNC1).